We begin with the raw amino-acid sequence, 577 residues long: CTP synthase (577 aa).

Residues 1 to 268 (MDPAFIFITG…GALLCERLRL (268 aa)) form an amidoligase domain region. Residue Ser14 participates in CTP binding. UTP is bound at residue Ser14. 15–20 (SLGKGI) lines the ATP pocket. Position 55 (Tyr55) interacts with L-glutamine. Asp72 lines the ATP pocket. Residues Asp72 and Glu142 each coordinate Mg(2+). CTP-binding positions include 149–151 (DIE), 189–194 (KTKPLQ), and Lys225. UTP contacts are provided by residues 189–194 (KTKPLQ) and Lys225. One can recognise a Glutamine amidotransferase type-1 domain in the interval 333–575 (TVALVGKYVS…VAAGLERKDS (243 aa)). Gly396 is an L-glutamine binding site. Residue Cys423 is the Nucleophile; for glutamine hydrolysis of the active site. Residues 424 to 427 (LGMQ), Glu447, and Arg503 contribute to the L-glutamine site. Active-site residues include His548 and Glu550.

Belongs to the CTP synthase family. In terms of assembly, homotetramer.

It catalyses the reaction UTP + L-glutamine + ATP + H2O = CTP + L-glutamate + ADP + phosphate + 2 H(+). The enzyme catalyses L-glutamine + H2O = L-glutamate + NH4(+). The catalysed reaction is UTP + NH4(+) + ATP = CTP + ADP + phosphate + 2 H(+). Its pathway is pyrimidine metabolism; CTP biosynthesis via de novo pathway; CTP from UDP: step 2/2. Allosterically activated by GTP, when glutamine is the substrate; GTP has no effect on the reaction when ammonia is the substrate. The allosteric effector GTP functions by stabilizing the protein conformation that binds the tetrahedral intermediate(s) formed during glutamine hydrolysis. Inhibited by the product CTP, via allosteric rather than competitive inhibition. Catalyzes the ATP-dependent amination of UTP to CTP with either L-glutamine or ammonia as the source of nitrogen. Regulates intracellular CTP levels through interactions with the four ribonucleotide triphosphates. This chain is CTP synthase, found in Treponema pallidum (strain Nichols).